Consider the following 163-residue polypeptide: Sperm surface protein Sp17 (163 aa).

2 disordered regions span residues 57-115 (PAEW…EKEE) and 129-163 (VARE…THEK). Composition is skewed to basic and acidic residues over residues 62 to 98 (SKVE…KEEE) and 129 to 139 (VAREEVKKMKT). The region spanning 114 to 143 (EEVAAVKIQAAFRGHVAREEVKKMKTDSLQ) is the IQ domain. A compositionally biased stretch (polar residues) spans 153–163 (DTGFTSRTHEK).

As to quaternary structure, homodimer. May interact with ROPN1. Testis- and sperm-specific.

It localises to the membrane. In terms of biological role, sperm surface zona pellucida binding protein. Helps to bind spermatozoa to the zona pellucida with high affinity. Might function in binding zona pellucida and carbohydrates. In Papio hamadryas (Hamadryas baboon), this protein is Sperm surface protein Sp17 (SPA17).